The primary structure comprises 347 residues: S-adenosylmethionine:tRNA ribosyltransferase-isomerase (347 aa).

The protein belongs to the QueA family. In terms of assembly, monomer.

It localises to the cytoplasm. It catalyses the reaction 7-aminomethyl-7-carbaguanosine(34) in tRNA + S-adenosyl-L-methionine = epoxyqueuosine(34) in tRNA + adenine + L-methionine + 2 H(+). Its pathway is tRNA modification; tRNA-queuosine biosynthesis. In terms of biological role, transfers and isomerizes the ribose moiety from AdoMet to the 7-aminomethyl group of 7-deazaguanine (preQ1-tRNA) to give epoxyqueuosine (oQ-tRNA). This chain is S-adenosylmethionine:tRNA ribosyltransferase-isomerase, found in Xylella fastidiosa (strain 9a5c).